Consider the following 267-residue polypeptide: MEMO1 family protein aq_890 (267 aa).

It belongs to the MEMO1 family.

This is MEMO1 family protein aq_890 from Aquifex aeolicus (strain VF5).